A 302-amino-acid chain; its full sequence is Aurora/IPL1-related protein kinase 2 (302 aa).

Residues 1-17 (MENKPQILQTKSKNTPN) are compositionally biased toward polar residues. A disordered region spans residues 1 to 23 (MENKPQILQTKSKNTPNKGGKLS). Positions 27-277 (FEIGRPLGKG…LQEVKDHYWV (251 aa)) constitute a Protein kinase domain. Residues 33–41 (LGKGKFGSV) and Lys56 contribute to the ATP site. Residue Asp150 is the Proton acceptor of the active site.

The protein belongs to the protein kinase superfamily. Ser/Thr protein kinase family. As to quaternary structure, interacts with zen-4 and icp-1. Part of a complex containing at least air-2; icp-1; csc-1 and bir-1. Interacts with tlk-1 and bmk-1.

The protein localises to the cytoplasm. The protein resides in the cytoskeleton. It localises to the chromosome. It is found in the midbody. It carries out the reaction L-seryl-[protein] + ATP = O-phospho-L-seryl-[protein] + ADP + H(+). It catalyses the reaction L-threonyl-[protein] + ATP = O-phospho-L-threonyl-[protein] + ADP + H(+). Its function is as follows. Serine/threonine-protein kinase which mediates both meiotic and mitotic chromosome segregation. Required for histone H3 'Ser-10' phosphorylation. Phosphorylates tlk-1 and zen-4. The chain is Aurora/IPL1-related protein kinase 2 (air-2) from Caenorhabditis briggsae.